A 183-amino-acid polypeptide reads, in one-letter code: Putative 3-methyladenine DNA glycosylase (183 aa).

Belongs to the DNA glycosylase MPG family.

The sequence is that of Putative 3-methyladenine DNA glycosylase from Wolbachia pipientis subsp. Culex pipiens (strain wPip).